A 338-amino-acid polypeptide reads, in one-letter code: Elongation factor Ts, mitochondrial (338 aa).

Residues 1–42 constitute a mitochondrion transit peptide; that stretch reads MSPSIAMFTLTPNARALASKTSKMDLIKNLRERTGAPIVDVK.

It belongs to the EF-Ts family.

Its subcellular location is the mitochondrion. Functionally, associates with the EF-Tu.GDP complex and induces the exchange of GDP to GTP. It remains bound to the aminoacyl-tRNA.EF-Tu.GTP complex up to the GTP hydrolysis stage on the ribosome. In Ostreococcus tauri, this protein is Elongation factor Ts, mitochondrial.